Here is a 288-residue protein sequence, read N- to C-terminus: Bifunctional protein FolD (288 aa).

Residues 166-168 and I232 each bind NADP(+); that span reads GAS.

It belongs to the tetrahydrofolate dehydrogenase/cyclohydrolase family. In terms of assembly, homodimer.

It carries out the reaction (6R)-5,10-methylene-5,6,7,8-tetrahydrofolate + NADP(+) = (6R)-5,10-methenyltetrahydrofolate + NADPH. The enzyme catalyses (6R)-5,10-methenyltetrahydrofolate + H2O = (6R)-10-formyltetrahydrofolate + H(+). The protein operates within one-carbon metabolism; tetrahydrofolate interconversion. Its function is as follows. Catalyzes the oxidation of 5,10-methylenetetrahydrofolate to 5,10-methenyltetrahydrofolate and then the hydrolysis of 5,10-methenyltetrahydrofolate to 10-formyltetrahydrofolate. This chain is Bifunctional protein FolD, found in Escherichia coli O139:H28 (strain E24377A / ETEC).